The chain runs to 670 residues: ATP-dependent RNA helicase DDX18 (670 aa).

Composition is skewed to polar residues over residues 31 to 42 (SNLTLSETQNGD) and 83 to 105 (VTKSPQKSTVLTNGEAAMQSSNS). The tract at residues 31-169 (SNLTLSETQN…ESEVPSLPLG (139 aa)) is disordered. The span at 117-154 (MVNDAEPDTKKAKTENKGKSEEESAETTKETENNVEKP) shows a compositional bias: basic and acidic residues. A Q motif motif is present at residues 179–207 (FASLCNLVNENTLKAIKEMGFTNMTEIQH). The 176-residue stretch at 210–385 (IRPLLEGRDL…RISLKKEPLY (176 aa)) folds into the Helicase ATP-binding domain. An ATP-binding site is contributed by 223-230 (AKTGSGKT). Residues 333-336 (DEAD) carry the DEAD box motif. Positions 399–569 (GLEQGYVVCP…DIQSQLEKLI (171 aa)) constitute a Helicase C-terminal domain.

Belongs to the DEAD box helicase family. DDX18/HAS1 subfamily. In terms of assembly, interacts with NOL8; the interaction is RNA-dependent. Interacts with PRC2 complex components EZH2, SUZ2 and JARID2; these interactions prevent deposition of the repressive H3K27me3 mark onto rDNA in pluripotent cells.

Its subcellular location is the nucleus. The protein resides in the nucleolus. It is found in the chromosome. It catalyses the reaction ATP + H2O = ADP + phosphate + H(+). In terms of biological role, ATP-dependent RNA helicase that plays a role in the regulation of R-loop homeostasis in both endogenous R-loop-prone regions and at sites of DNA damage. At endogenous loci such as actively transcribed genes, may act as a helicase to resolve the formation of R-loop during transcription and prevent the interference of R-loop with DNA-replication machinery. Also participates in the removal of DNA-lesion-associated R-loop. Plays an essential role for establishing pluripotency during embryogenesis and for pluripotency maintenance in embryonic stem cells. Mechanistically, prevents the polycomb repressive complex 2 (PRC2) from accessing rDNA loci and protects the active chromatin status in nucleolus. The protein is ATP-dependent RNA helicase DDX18 (DDX18) of Homo sapiens (Human).